We begin with the raw amino-acid sequence, 101 residues long: MAKKGDWVLIHKIVLSPEERAPQVPDDTKKVPLEMWIKGYLNEDAQIGDQVSITTRTKRVEEGKLLEVNPYYTHDFGKFVPELLKISEQVREITFGGEGNE.

Belongs to the OrtA family. Heterodimer with OrtB.

It catalyses the reaction D-alanine + acetyl-CoA = (2R)-2-amino-4-oxopentanoate + CoA. Its activity is regulated as follows. Completely inhibited by p-chloromercuribenzoate (p-ClHgBzO) and acetyl-CoA, and partially inhibited by N-ethylmaleimide. Its function is as follows. Involved in the ornithine fermentation pathway. Catalyzes the thiolytic cleavage of 2-amino-4-ketopentanoate (AKP) with coenzyme A (CoA) to form acetyl-CoA and alanine. It is strictly specific for AKP. The protein is 2-amino-4-ketopentanoate thiolase alpha subunit of Acetoanaerobium sticklandii (strain ATCC 12662 / DSM 519 / JCM 1433 / CCUG 9281 / NCIMB 10654 / HF) (Clostridium sticklandii).